A 416-amino-acid polypeptide reads, in one-letter code: Serine hydroxymethyltransferase (416 aa).

(6S)-5,6,7,8-tetrahydrofolate is bound by residues Leu121 and 125–127 (GHL). Lys230 is modified (N6-(pyridoxal phosphate)lysine). 355 to 357 (SPF) provides a ligand contact to (6S)-5,6,7,8-tetrahydrofolate.

The protein belongs to the SHMT family. As to quaternary structure, homodimer. It depends on pyridoxal 5'-phosphate as a cofactor.

It localises to the cytoplasm. The enzyme catalyses (6R)-5,10-methylene-5,6,7,8-tetrahydrofolate + glycine + H2O = (6S)-5,6,7,8-tetrahydrofolate + L-serine. It participates in one-carbon metabolism; tetrahydrofolate interconversion. Its pathway is amino-acid biosynthesis; glycine biosynthesis; glycine from L-serine: step 1/1. In terms of biological role, catalyzes the reversible interconversion of serine and glycine with tetrahydrofolate (THF) serving as the one-carbon carrier. This reaction serves as the major source of one-carbon groups required for the biosynthesis of purines, thymidylate, methionine, and other important biomolecules. Also exhibits THF-independent aldolase activity toward beta-hydroxyamino acids, producing glycine and aldehydes, via a retro-aldol mechanism. The chain is Serine hydroxymethyltransferase from Streptococcus thermophilus (strain ATCC BAA-250 / LMG 18311).